Reading from the N-terminus, the 79-residue chain is Small ribosomal subunit protein bS20 (79 aa).

Belongs to the bacterial ribosomal protein bS20 family.

Binds directly to 16S ribosomal RNA. This Karelsulcia muelleri (strain GWSS) (Sulcia muelleri) protein is Small ribosomal subunit protein bS20.